The sequence spans 158 residues: Low molecular weight phosphotyrosine protein phosphatase (158 aa).

At Ala2 the chain carries N-acetylalanine. The Nucleophile role is filled by Cys13. Arg19 is a catalytic residue. Asp130 serves as the catalytic Proton donor. Phosphotyrosine is present on residues Tyr132 and Tyr133.

It belongs to the low molecular weight phosphotyrosine protein phosphatase family.

It localises to the cytoplasm. It carries out the reaction O-phospho-L-tyrosyl-[protein] + H2O = L-tyrosyl-[protein] + phosphate. It catalyses the reaction a phosphate monoester + H2O = an alcohol + phosphate. Its function is as follows. Acts on tyrosine phosphorylated proteins, low-MW aryl phosphates and natural and synthetic acyl phosphates. This chain is Low molecular weight phosphotyrosine protein phosphatase (ACP1), found in Gallus gallus (Chicken).